Consider the following 210-residue polypeptide: Protein DrgA (210 aa).

This sequence belongs to the nitroreductase family. FMN serves as cofactor.

Functionally, controls resistance to the herbicide Dinoseb and metronidazole. Involved in detoxification of Dinoseb via the reduction of the nitro group(s) and this process is accompanied by the formation of toxic superoxide anions. The polypeptide is Protein DrgA (drgA) (Synechocystis sp. (strain ATCC 27184 / PCC 6803 / Kazusa)).